A 192-amino-acid chain; its full sequence is uncharacterized protein (192 aa).

The protein belongs to the IIV-6 358L family.

This is an uncharacterized protein from Aedes vexans (Inland floodwater mosquito).